Consider the following 162-residue polypeptide: MAASCLRPAPTASAQMMTRSPVAGLPRPCSALQRSGCTLQGAFGTFAPQTTRTFVVTWAKGGVMDAPTTTQQPASGVERSQKRPPIYKVLLHNDNYNKREYVVKVLLKVVEQITVDDAVTCMQEAHETGVALVVACPQDNAERYCEGLRLNGLTSTIEPGGC.

A chloroplast-targeting transit peptide spans 1–58; that stretch reads MAASCLRPAPTASAQMMTRSPVAGLPRPCSALQRSGCTLQGAFGTFAPQTTRTFVVTW.

This sequence belongs to the ClpS family.

Its subcellular location is the plastid. The protein localises to the chloroplast stroma. Functionally, small adapter protein that modulate the activity of plastid Clp protease system (CLPC). Probably involved in substrate selection for plastid CLPC. The polypeptide is ATP-dependent Clp protease adapter protein CLPS1, chloroplastic (Chlamydomonas reinhardtii (Chlamydomonas smithii)).